The following is a 421-amino-acid chain: Glucan 1,3-beta-glucosidase (421 aa).

The N-terminal stretch at 1 to 15 is a signal peptide; the sequence is MKLTKLVALAGAALA. The active-site Proton donor is E213. Disulfide bonds link C296–C419 and C321–C347. E313 serves as the catalytic Nucleophile.

Belongs to the glycosyl hydrolase 5 (cellulase A) family.

It localises to the secreted. It catalyses the reaction Successive hydrolysis of beta-D-glucose units from the non-reducing ends of (1-&gt;3)-beta-D-glucans, releasing alpha-glucose.. The protein is Glucan 1,3-beta-glucosidase (EXG1) of Yarrowia lipolytica (strain CLIB 122 / E 150) (Yeast).